We begin with the raw amino-acid sequence, 859 residues long: MAAAMVAAVHGVGRQDRSSPGGGGAPQVDTGKYVRYTPEQVEALERVYGECPKPSSLRRQQLIRECPILSNIEPKQIKVWFQNRRCREKQRKEASRLQTVNRKLTAMNKLLMEENDRLQKQVSRLVYENGYMRQQLHNPSVATTDTSCESVVTSGQHHQQQNPAATRPQRDANNPAGLLAIAEETLAEFLSKATGTAVDWVQMVGMKPGPDSIGIIAVSHNCSGVAARACGLVSLEPTKVAEILKDRPSWYRDCRCVDVLHVIPTGNGGTIELIYMQTYAPTTLAAPRDFWILRYTSGLEDGSLVICERSLTQSTGGPSGPNTPNFVRAEVLPSGYLIRPCEGGGSMIHIVDHVDLDAWSVPEVLRPLYESPKILAQKMTIAALRHIRQIAHESSGEMPYGGGRQPAVLRTFSQRLSRGFNDAVNGFPDDGWSLMSSDGAEDVTIAFNSSPNKLVGSHVNSSQLFSAIGGGILCAKASMLLQNVPPALLVRFLREHRSEWADPGVDAYSAAALRASPYAVPGLRAGGFMGSQVILPLAHTLEHEEFLEVIRLEGHSLCHDEVVLSRDMYLLQLCSGVDENAAGACAQLVFAPIDESFADDAPLLPSGFRVIPLDGKTDAPSATRTLDLASTLEVGSGGTTRASSDTSSTCNTRSVLTIAFQFSYENHLRESVAAMARQYVRTVVASVQRVAMAIAPSRLGGQIETKNPPGSPEAHTLARWIGRSYRFHTGADLLRTDSQSTDSSLKAMWQHSDSIMCCSLKAAPVFTFANQAGLDMLETTLIALQDISLEKILDDDGRKALCTEFPKIMQQGFAYLPGGVCVSSMGRPVSYEQAVAWKVLSDDDTPHCLAFMFVNWSFV.

Positions 7 to 31 (AAVHGVGRQDRSSPGGGGAPQVDTG) are disordered. The segment at residues 29-92 (DTGKYVRYTP…NRRCREKQRK (64 aa)) is a DNA-binding region (homeobox). Residues 100–129 (VNRKLTAMNKLLMEENDRLQKQVSRLVYEN) adopt a coiled-coil conformation. Over residues 146–164 (TSCESVVTSGQHHQQQNPA) the composition is skewed to polar residues. The segment at 146 to 172 (TSCESVVTSGQHHQQQNPAATRPQRDA) is disordered. The 223-residue stretch at 171–393 (DANNPAGLLA…LRHIRQIAHE (223 aa)) folds into the START domain.

Belongs to the HD-ZIP homeobox family. Class III subfamily. In terms of tissue distribution, expressed in seedlings, roots, stems, leaf sheaths and blades and panicles.

It localises to the nucleus. Its function is as follows. Probable transcription factor. This is Homeobox-leucine zipper protein HOX32 (HOX32) from Oryza sativa subsp. japonica (Rice).